Reading from the N-terminus, the 239-residue chain is Ribonuclease HII (239 aa).

The RNase H type-2 domain maps to 30-221 (GPVAGVDEVG…VRRVATRSNG (192 aa)). A divalent metal cation is bound by residues aspartate 36, glutamate 37, and aspartate 130. The interval 219–239 (SNGAAAAEREADPPQERDGTG) is disordered. Residues 225-239 (AEREADPPQERDGTG) are compositionally biased toward basic and acidic residues.

It belongs to the RNase HII family. Mn(2+) serves as cofactor. Requires Mg(2+) as cofactor.

It localises to the cytoplasm. The enzyme catalyses Endonucleolytic cleavage to 5'-phosphomonoester.. In terms of biological role, endonuclease that specifically degrades the RNA of RNA-DNA hybrids. This is Ribonuclease HII from Mycobacterium marinum (strain ATCC BAA-535 / M).